Consider the following 86-residue polypeptide: Small ribosomal subunit protein eS27y (86 aa).

The C4-type zinc finger occupies 39–61 (CQGCFNITTVFSHSQTVVVCGNC).

It belongs to the eukaryotic ribosomal protein eS27 family. Zn(2+) is required as a cofactor.

In terms of biological role, may be involved in the elimination of damaged mRNA after UV irradiation. In Arabidopsis thaliana (Mouse-ear cress), this protein is Small ribosomal subunit protein eS27y (RPS27B).